The chain runs to 430 residues: Dihydrolipoyllysine-residue acetyltransferase component of pyruvate dehydrogenase complex (430 aa).

In terms of domain architecture, Lipoyl-binding spans Ala-2 to Asp-77. Lys-43 is subject to N6-lipoyllysine. The interval Asp-80 to Arg-122 is disordered. Residues Met-84–Ala-104 are compositionally biased toward basic and acidic residues. The 38-residue stretch at Lys-125–Leu-162 folds into the Peripheral subunit-binding (PSBD) domain. Positions Gly-164–Pro-199 are disordered. Positions Ala-166–Ser-193 are enriched in low complexity. Residue His-401 is part of the active site.

The protein belongs to the 2-oxoacid dehydrogenase family. In terms of assembly, forms a 24-polypeptide structural core with octahedral symmetry. (R)-lipoate serves as cofactor.

The enzyme catalyses N(6)-[(R)-dihydrolipoyl]-L-lysyl-[protein] + acetyl-CoA = N(6)-[(R)-S(8)-acetyldihydrolipoyl]-L-lysyl-[protein] + CoA. In terms of biological role, the pyruvate dehydrogenase complex catalyzes the overall conversion of pyruvate to acetyl-CoA and CO(2). It contains multiple copies of three enzymatic components: pyruvate dehydrogenase (E1), dihydrolipoamide acetyltransferase (E2) and lipoamide dehydrogenase (E3). The protein is Dihydrolipoyllysine-residue acetyltransferase component of pyruvate dehydrogenase complex (pdhC) of Staphylococcus aureus (strain Mu50 / ATCC 700699).